The following is a 183-amino-acid chain: Adenine phosphoribosyltransferase (183 aa).

This sequence belongs to the purine/pyrimidine phosphoribosyltransferase family. As to quaternary structure, homodimer.

Its subcellular location is the cytoplasm. It catalyses the reaction AMP + diphosphate = 5-phospho-alpha-D-ribose 1-diphosphate + adenine. It participates in purine metabolism; AMP biosynthesis via salvage pathway; AMP from adenine: step 1/1. Its function is as follows. Catalyzes a salvage reaction resulting in the formation of AMP, that is energically less costly than de novo synthesis. This Proteus mirabilis (strain HI4320) protein is Adenine phosphoribosyltransferase.